Reading from the N-terminus, the 382-residue chain is Mannitol-1-phosphate 5-dehydrogenase (382 aa).

3-14 serves as a coordination point for NAD(+); sequence ALHFGAGNIGRG.

It belongs to the mannitol dehydrogenase family.

The enzyme catalyses D-mannitol 1-phosphate + NAD(+) = beta-D-fructose 6-phosphate + NADH + H(+). The protein is Mannitol-1-phosphate 5-dehydrogenase of Cronobacter sakazakii (strain ATCC BAA-894) (Enterobacter sakazakii).